A 144-amino-acid polypeptide reads, in one-letter code: MRQTTIVKHKEVNKKWFLIDADGVVLGKLATLTASILRGKNKPDFTPNVDMGDNIVIINAEKVVLTANKEEDKKYYSHSGYPGGLKVINAAKLRAKKPIAIVEKAVKGMLPHTKLGRQQFRNLYVYAGSVHKQEAQQPVRIEVK.

It belongs to the universal ribosomal protein uL13 family. As to quaternary structure, part of the 50S ribosomal subunit.

Functionally, this protein is one of the early assembly proteins of the 50S ribosomal subunit, although it is not seen to bind rRNA by itself. It is important during the early stages of 50S assembly. This is Large ribosomal subunit protein uL13 from Mycoplasmopsis pulmonis (strain UAB CTIP) (Mycoplasma pulmonis).